A 299-amino-acid chain; its full sequence is Mitochondrial 2-oxodicarboxylate carrier (299 aa).

Solcar repeat units follow at residues 11–100 (REAS…YKKL), 107–196 (SPAL…VKNM), and 205–294 (LEFL…TYSW). Helical transmembrane passes span 17–37 (IVAG…LDVV), 70–89 (FGFY…KRAV), 113–133 (TIAG…FEVV), 167–187 (GLNK…MVYF), 205–225 (LEFL…SVIN), and 277–297 (LGPG…WLQE).

The protein belongs to the mitochondrial carrier (TC 2.A.29) family.

It localises to the mitochondrion inner membrane. It carries out the reaction 2-oxoadipate(in) + 2-oxoglutarate(out) = 2-oxoadipate(out) + 2-oxoglutarate(in). The catalysed reaction is hexanedioate(in) + 2-oxoglutarate(out) = hexanedioate(out) + 2-oxoglutarate(in). It catalyses the reaction L-2-aminoadipate(in) + 2-oxoglutarate(out) = L-2-aminoadipate(out) + 2-oxoglutarate(in). The enzyme catalyses glutarate(in) + 2-oxoglutarate(out) = glutarate(out) + 2-oxoglutarate(in). It carries out the reaction 2-oxoheptanedioate(in) + 2-oxoglutarate(out) = 2-oxoheptanedioate(out) + 2-oxoglutarate(in). The catalysed reaction is heptanedioate(in) + 2-oxoglutarate(out) = heptanedioate(out) + 2-oxoglutarate(in). It catalyses the reaction citrate(in) + 2-oxoglutarate(out) = citrate(out) + 2-oxoglutarate(in). Functionally, transports dicarboxylates across the inner membranes of mitochondria by a counter-exchange mechanism. Can transport 2-oxoadipate (2-oxohexanedioate), 2-oxoglutarate, adipate (hexanedioate), glutarate, and to a lesser extent, pimelate (heptanedioate), 2-oxopimelate (2-oxoheptanedioate), 2-aminoadipate (2-aminohexanedioate), oxaloacetate, and citrate. Plays a central role in catabolism of lysine, hydroxylysine, and tryptophan, by transporting common metabolite intermediates (such as 2-oxoadipate) into the mitochondria, where it is converted into acetyl-CoA and can enter the citric acid (TCA) cycle. The protein is Mitochondrial 2-oxodicarboxylate carrier (SLC25A21) of Pongo abelii (Sumatran orangutan).